Consider the following 172-residue polypeptide: Large ribosomal subunit protein uL5 (172 aa).

It belongs to the universal ribosomal protein uL5 family. Part of the 50S ribosomal subunit; contacts the 5S rRNA and probably tRNA. Forms a bridge to the 30S subunit in the 70S ribosome.

In terms of biological role, this is one of the proteins that bind and probably mediate the attachment of the 5S RNA into the large ribosomal subunit, where it forms part of the central protuberance. In the 70S ribosome it contacts protein S13 of the 30S subunit (bridge B1b), connecting the 2 subunits; this bridge is implicated in subunit movement. May contact the P site tRNA; the 5S rRNA and some of its associated proteins might help stabilize positioning of ribosome-bound tRNAs. The chain is Large ribosomal subunit protein uL5 from Haloferax mediterranei (strain ATCC 33500 / DSM 1411 / JCM 8866 / NBRC 14739 / NCIMB 2177 / R-4) (Halobacterium mediterranei).